The chain runs to 378 residues: Response regulator aspartate phosphatase A (378 aa).

TPR repeat units follow at residues Tyr-101–Asp-137, Ala-148–Arg-181, Gln-183–Glu-215, Ser-222–Glu-255, Pro-261–Tyr-294, and Glu-336–Ile-369.

This sequence belongs to the Rap family. In terms of assembly, homodimer. Interacts with its substrate, phosphorylated Spo0F, and its inhibitor, the PhrA pentapeptide. The RapA dimer forms a stable complex with two molecules of phosphorylated Spo0F. The complex is dissociated after dephosphorylation of Spo0F by RapA. Requires Mn(2+) as cofactor.

The protein resides in the cytoplasm. Its activity is regulated as follows. Phosphatase activity is inhibited by the phosphatase regulator PhrA. Interaction with PhrA dissociates the RapA-Spo0F complex. Activity is abolished in the presence of EDTA. Its function is as follows. Involved in the regulation of sporulation. Acts as a phosphatase that specifically dephosphorylates the sporulation initiation phosphotransferase Spo0F and inhibits its activity. This is Response regulator aspartate phosphatase A from Bacillus subtilis (strain 168).